Here is a 677-residue protein sequence, read N- to C-terminus: Mitochondrial disaggregase (677 aa).

The transit peptide at methionine 1 to serine 28 directs the protein to the mitochondrion. Residues proline 92–cysteine 126 are autoinhibitory. ANK repeat units lie at residues serine 133–alanine 162, leucine 166–leucine 195, lysine 235–arginine 265, and methionine 268–arginine 297. Positions 316, 318, 353, 354, 355, 356, 357, 358, 425, and 466 each coordinate ATP. Residues leucine 477–threonine 505 are regulatory; slows ATPase and disaggregase activities. Arginine 531 serves as a coordination point for ATP. Lysine 559 is modified (N6-acetyllysine). An ATP-binding site is contributed by arginine 590.

This sequence belongs to the ClpA/ClpB family. In terms of assembly, homododecamer when substrate-bound; the homododecamer consists of 2 homohexamers stacked head-to-head via ANK repeat-mediated interactions. The active substrate-bound form is likely to exist in a dynamic equilibrium between homohexamers and homododecamers. Homotetradecamer in the unbound state which is remodeled upon substrate binding into the homododecamer. Interacts with PHB and PHB2. Interacts with MAVS; the interaction is enhanced by Sendai virus infection. Proteolytically cleaved by protease PARL. ATP-dependent protein disaggregase activity is stimulated by PARL-mediated cleavage of the N-terminal autoinhibitory peptide.

It localises to the mitochondrion intermembrane space. It carries out the reaction ATP + H2O = ADP + phosphate + H(+). With respect to regulation, disaggregase activity is inhibited by ADP. Functionally, functions as a regulatory ATPase and participates in secretion/protein trafficking process. Has ATP-dependent protein disaggregase activity and is required to maintain the solubility of key mitochondrial proteins. Involved in mitochondrial-mediated antiviral innate immunity, activates RIG-I-mediated signal transduction and production of IFNB1 and pro-inflammatory cytokine IL6. Plays a role in granulocyte differentiation. This chain is Mitochondrial disaggregase, found in Bos taurus (Bovine).